The following is a 147-amino-acid chain: Ubiquitin-conjugating enzyme E2 5A (147 aa).

The span at 1–15 (MASKRIQKELKDLQK) shows a compositional bias: basic and acidic residues. The interval 1 to 24 (MASKRIQKELKDLQKDPPTSCSAG) is disordered. The region spanning 1–147 (MASKRIQKEL…ARTWTQRYAM (147 aa)) is the UBC core domain. The active-site Glycyl thioester intermediate is the Cys-85.

This sequence belongs to the ubiquitin-conjugating enzyme family.

The enzyme catalyses S-ubiquitinyl-[E1 ubiquitin-activating enzyme]-L-cysteine + [E2 ubiquitin-conjugating enzyme]-L-cysteine = [E1 ubiquitin-activating enzyme]-L-cysteine + S-ubiquitinyl-[E2 ubiquitin-conjugating enzyme]-L-cysteine.. Its pathway is protein modification; protein ubiquitination. Functionally, E2 conjugating enzyme that associates with the E3 ubiquitin-protein ligase EL5 to mediate ubiquitination of target proteins. The protein is Ubiquitin-conjugating enzyme E2 5A (UBC5A) of Oryza sativa subsp. japonica (Rice).